Consider the following 385-residue polypeptide: Na(+)/H(+) antiporter NhaA (385 aa).

11 helical membrane-spanning segments follow: residues 9–29, 45–65, 87–107, 114–134, 155–175, 198–218, 220–235, 245–265, 282–302, 312–332, and 345–365; these read YSAI…NVLD, IFGL…VFFF, IIPG…YLSV, GWPV…AIFG, AGIV…WIIV, TFLI…SVYQ, GIHA…IMLN, ALEP…AAMV, ILLG…IIAL, FFNL…SLLM, and QGVI…IILM.

This sequence belongs to the NhaA Na(+)/H(+) (TC 2.A.33) antiporter family.

The protein localises to the cell membrane. The enzyme catalyses Na(+)(in) + 2 H(+)(out) = Na(+)(out) + 2 H(+)(in). Functionally, na(+)/H(+) antiporter that extrudes sodium in exchange for external protons. The sequence is that of Na(+)/H(+) antiporter NhaA from Tropheryma whipplei (strain Twist) (Whipple's bacillus).